Consider the following 280-residue polypeptide: Putative pyruvate, phosphate dikinase regulatory protein (280 aa).

ADP is bound at residue 154–161; sequence GVSRTSKT.

This sequence belongs to the pyruvate, phosphate/water dikinase regulatory protein family. PDRP subfamily.

The enzyme catalyses N(tele)-phospho-L-histidyl/L-threonyl-[pyruvate, phosphate dikinase] + ADP = N(tele)-phospho-L-histidyl/O-phospho-L-threonyl-[pyruvate, phosphate dikinase] + AMP + H(+). The catalysed reaction is N(tele)-phospho-L-histidyl/O-phospho-L-threonyl-[pyruvate, phosphate dikinase] + phosphate + H(+) = N(tele)-phospho-L-histidyl/L-threonyl-[pyruvate, phosphate dikinase] + diphosphate. Functionally, bifunctional serine/threonine kinase and phosphorylase involved in the regulation of the pyruvate, phosphate dikinase (PPDK) by catalyzing its phosphorylation/dephosphorylation. The polypeptide is Putative pyruvate, phosphate dikinase regulatory protein (Nitrobacter winogradskyi (strain ATCC 25391 / DSM 10237 / CIP 104748 / NCIMB 11846 / Nb-255)).